A 238-amino-acid polypeptide reads, in one-letter code: Probable phosphatase phospho2 (238 aa).

The active-site Nucleophile is Asp8. Residues Asp8 and Asp10 each contribute to the Mg(2+) site. Asp10 serves as the catalytic Proton donor. Residues Asp19 and Asp99 each coordinate substrate. Asp179 contributes to the Mg(2+) binding site.

This sequence belongs to the HAD-like hydrolase superfamily. PHOSPHO family. It depends on Mg(2+) as a cofactor.

Functionally, probable phosphatase. The sequence is that of Probable phosphatase phospho2 (phospho2) from Xenopus tropicalis (Western clawed frog).